The primary structure comprises 276 residues: Ribosomal RNA large subunit methyltransferase E (276 aa).

5 residues coordinate S-adenosyl-L-methionine: Gly-52, Phe-54, Asp-72, Asp-90, and Asp-114. The Proton acceptor role is filled by Lys-154. A compositionally biased stretch (low complexity) spans 203-249 (RAAPTANATPTPTSTSTSTPTSTSTPTSTSTSTPAPTLTQTQTQTPK). Residues 203-276 (RAAPTANATP…AKTGASRRTR (74 aa)) form a disordered region. Over residues 265-276 (AKAKTGASRRTR) the composition is skewed to basic residues.

Belongs to the class I-like SAM-binding methyltransferase superfamily. RNA methyltransferase RlmE family.

Its subcellular location is the cytoplasm. It catalyses the reaction uridine(2552) in 23S rRNA + S-adenosyl-L-methionine = 2'-O-methyluridine(2552) in 23S rRNA + S-adenosyl-L-homocysteine + H(+). Its function is as follows. Specifically methylates the uridine in position 2552 of 23S rRNA at the 2'-O position of the ribose in the fully assembled 50S ribosomal subunit. This is Ribosomal RNA large subunit methyltransferase E from Anaeromyxobacter sp. (strain Fw109-5).